A 445-amino-acid polypeptide reads, in one-letter code: Histidinol dehydrogenase (445 aa).

NAD(+) contacts are provided by Tyr-138, Gln-199, and Asn-222. Substrate is bound by residues Ser-245, Gln-267, and His-270. Residues Gln-267 and His-270 each contribute to the Zn(2+) site. Residues Glu-335 and His-336 each act as proton acceptor in the active site. His-336, Asp-369, Glu-423, and His-428 together coordinate substrate. Residue Asp-369 coordinates Zn(2+). Residue His-428 participates in Zn(2+) binding.

Belongs to the histidinol dehydrogenase family. Zn(2+) is required as a cofactor.

The enzyme catalyses L-histidinol + 2 NAD(+) + H2O = L-histidine + 2 NADH + 3 H(+). Its pathway is amino-acid biosynthesis; L-histidine biosynthesis; L-histidine from 5-phospho-alpha-D-ribose 1-diphosphate: step 9/9. Functionally, catalyzes the sequential NAD-dependent oxidations of L-histidinol to L-histidinaldehyde and then to L-histidine. The sequence is that of Histidinol dehydrogenase from Burkholderia mallei (strain ATCC 23344).